The chain runs to 4001 residues: Ankyrin repeat and KH domain-containing protein mask (4001 aa).

Positions 1 to 14 (MNNDAKNHESDDLN) are enriched in basic and acidic residues. Disordered stretches follow at residues 1–61 (MNND…NRQL), 91–174 (KNEP…GGGS), and 391–494 (DTDT…FLLD). Residues 15-30 (VRSTAYFNQQTTTNQP) show a composition bias toward polar residues. Residues 38–61 (NNTGSGSGSNNNNNNTNQNPNRQL) show a composition bias toward low complexity. Over residues 94–117 (PLTTTESSGVLTNTPLPSNSRLKV) the composition is skewed to polar residues. The span at 118–159 (NNNNNTNNTAKMSGTSSSQSSATPTPPTASSSTTTTTTTNIS) shows a compositional bias: low complexity. Positions 160–174 (TGGGGSGSSGGGGGS) are enriched in gly residues. Composition is skewed to acidic residues over residues 408–425 (SESEEESVSEDDIPESDP) and 434–486 (VRED…EDAP). The residue at position 501 (Ser-501) is a Phosphoserine. 15 ANK repeats span residues 546 to 575 (SGFSRSLVAACTDNDVNTVKRLLCKGNVNL), 584 to 614 (DGESLLSMACSAGYYELAQVLLAMSAAQVED), 618 to 647 (KDSTPLMEAASAGHLDIVKLLLNHNADVNA), 651 to 680 (TGNTPLMFACAGGQVDVVKVLLKHGANVEE), 684 to 713 (NGHTPLMEAASAGHVEVAKVLLEHGAGINT), 718 to 747 (FKESALTLACYKGHLDMVRFLLQAGADQEH), 751 to 780 (EMHTALMEASMDGHVEVARLLLDSGAQVNM), 784 to 813 (SFESPLTLAACGGHVELATLLIERGANIEE), 817 to 846 (EGYTPLMEAAREGHEEMVALLLSKGANINA), 851 to 880 (TQETALTLACCGGFMEVAAFLIKEGANLEL), 881 to 910 (GASTPLMEASQEGHTDLVSFLLKKKANVHA), 914 to 943 (TGDTALTHACENGHTDAAGVLLSYGAELEH), 947 to 976 (GGRTPLMKACRAGHLCTVKFLIQKGANVNK), 981 to 1011 (NDHTALSLACAGGHQSVVELLLKNNADPFHK), and 1014 to 1043 (DNSTMLIEASKGGHTRVVELLFRYPNISPT). 2 disordered regions span residues 1046 to 1067 (AASANVTQAAPTSNQPGPNQMR) and 1306 to 1376 (QPGE…PTAL). The segment covering 1367 to 1376 (DNNQPVPTAL) has biased composition (polar residues). 2 positions are modified to phosphoserine: Ser-1389 and Ser-1588. Disordered regions lie at residues 1583–1612 (GDQPKSPTETPPEMEETTMSSPTEADRLGS), 1646–1669 (SDLESECEDDAEGGAGADCEENTL), 1682–1779 (EDGI…SLPL), 1852–1872 (VVHQKQQHGEGDQQCEDDGSA), 2084–2108 (MAQHQAQQQQGVGEPLTEQQQQQLH), and 2225–2256 (TPAPSSGVSSTKSMPGGIAKKAIDKQSRKERR). 3 stretches are compositionally biased toward acidic residues: residues 1646 to 1657 (SDLESECEDDAE), 1685 to 1704 (IIVEEEEDDEEEDDDDEEQD), and 1716 to 1759 (DDED…EPDS). Positions 1760–1776 (DQGTGNNNNNSKSGASS) are enriched in low complexity. Residues 2084–2093 (MAQHQAQQQQ) show a composition bias toward low complexity. The span at 2228 to 2237 (PSSGVSSTKS) shows a compositional bias: polar residues. 10 ANK repeats span residues 2312-2341 (NHDTALTLACAGGHEELVELLINRGANIEH), 2345-2374 (KGFTPLILAATAGHDKVVDILLKHSAELEA), 2379-2408 (TKDTPLSLACSGGRYEVVELLLSVGANKEH), 2412-2441 (SDYTPLSLAASGGYVNIIKLLLSHGAEINS), 2447-2476 (LGISPLMLAAMNGHTPAVKLLLDQGSDINA), 2481-2510 (NRNTALTLACFQGRHEVVSLLLDRRANVEH), 2514-2543 (TGLTPLMEAASGGYIEVGRVLLDKGADVNA), 2549-2578 (SRDTALTIAADKGHQKFVELLLSRNASVEV), 2582-2611 (KGNSPLWLAAHGGHLSVVELLYDHNADIDS), and 2615-2644 (RRVSCLMAAFRKGHTKIVKWMVQYVSQFPS). A coiled-coil region spans residues 2674–2732 (AKEAQAVKANKNASILLEELDLERTREESRKAAAARRRERKKKKKMEKKEEKRRQQQGN). Ser-2687 is subject to Phosphoserine. Thr-2698 is subject to Phosphothreonine. The disordered stretch occupies residues 2699-3033 (REESRKAAAA…TSTTTAASSV (335 aa)). Residues 2706–2719 (AAARRRERKKKKKM) are compositionally biased toward basic residues. Residues 2739-2762 (MQGDDDDASDKDDDSDKDDEDEEA) are compositionally biased toward acidic residues. A phosphoserine mark is found at Ser-2747 and Ser-2753. The span at 2793–2810 (SQSAQAAEAAANSVSTNS) shows a compositional bias: low complexity. Over residues 2828–2839 (EPTQPVITSNSV) the composition is skewed to polar residues. The span at 2868–2886 (RQLDVKKEEPALKKKEEKN) shows a compositional bias: basic and acidic residues. Residues 2906–2941 (ALPAKQQPSSSSKLQSSESASNINSSTATNTSSANT) are compositionally biased toward low complexity. Residues 2950–2960 (ASQTASATTLN) show a composition bias toward polar residues. A compositionally biased stretch (basic and acidic residues) spans 2963–2975 (KRTEVDGWKEVVR). Residues 2995–3004 (TATSSATSVQ) show a composition bias toward polar residues. The span at 3012-3032 (ANSSSNSSSSLTTSTTTAASS) shows a compositional bias: low complexity. Residues 3036 to 3100 (MTCKKVQVPV…DATKQAHMLI (65 aa)) form the KH domain. 3 stretches are compositionally biased toward low complexity: residues 3156–3178 (ASTTSTSSSSSASSTTPAGASYS), 3195–3227 (SGRSSTSVKSNGSSTKVSASSGSGSRSGRAGSS), and 3244–3257 (NGVIKSKSESSSKS). Disordered regions lie at residues 3156 to 3329 (ASTT…GQGG), 3383 to 3457 (KPIA…QTSQ), 3520 to 3636 (AVGD…PPTA), and 3744 to 3786 (IFPQ…GGAA). The segment covering 3262–3278 (QKSSTTLGKSSTVSPGA) has biased composition (polar residues). Low complexity predominate over residues 3396–3416 (GSPTQVQQQHQTQQQQQQQLP). The segment covering 3417 to 3427 (QPAPVPGPQPQ) has biased composition (pro residues). The span at 3428–3457 (QQPLQQQQQQQAPQQQPQQPNQQQQPQTSQ) shows a compositional bias: low complexity. A compositionally biased stretch (polar residues) spans 3539–3559 (NILSSPVGSSKASSNHSTSPP). The span at 3565–3577 (QQQQQQQPQSSQQ) shows a compositional bias: low complexity. Residue Ser-3596 is modified to Phosphoserine. Over residues 3774-3786 (PPGTGARQPGGAA) the composition is skewed to low complexity. Residues Ser-3820, Ser-3822, and Ser-3825 each carry the phosphoserine modification. Residues 3876 to 3945 (KAQPPGLQQP…HNMQAPPNMS (70 aa)) form a disordered region. The segment covering 3891 to 3910 (SQQQQQQPLNWLKQQPQQQQ) has biased composition (low complexity).

May interact with Unc-89 (via protein kinase domain 1 or 2). In terms of tissue distribution, expressed ubiquitously in eye imaginal disk, slightly higher expression is seen in presumptive photoreceptors. Expressed in indirect flight muscle (IFM) (at protein level).

The protein localises to the cytoplasm. Its subcellular location is the myofibril. It is found in the sarcomere. The protein resides in the z line. It localises to the m line. Mediator of receptor tyrosine kinase (RTK) signaling, and may act either downstream of MAPK or transduce signaling through a parallel branch of the RTK pathway. Required for the development and organization of indirect flight muscle sarcomeres by regulating the formation of M line and H zone and the correct assembly of thick and thin filaments in the sarcomere. The chain is Ankyrin repeat and KH domain-containing protein mask from Drosophila melanogaster (Fruit fly).